A 464-amino-acid polypeptide reads, in one-letter code: tRNA modification GTPase MnmE (464 aa).

Positions 29, 91, and 131 each coordinate (6S)-5-formyl-5,6,7,8-tetrahydrofolate. The TrmE-type G domain maps to 226 to 387 (GLKVALTGKP…LINYLLKKCG (162 aa)). Asn236 is a K(+) binding site. GTP contacts are provided by residues 236 to 241 (NVGKSS), 255 to 261 (TDLPGTT), and 280 to 283 (DTAG). A Mg(2+)-binding site is contributed by Ser240. K(+) is bound by residues Thr255, Leu257, and Thr260. Thr261 contacts Mg(2+). Lys464 provides a ligand contact to (6S)-5-formyl-5,6,7,8-tetrahydrofolate.

The protein belongs to the TRAFAC class TrmE-Era-EngA-EngB-Septin-like GTPase superfamily. TrmE GTPase family. In terms of assembly, homodimer. Heterotetramer of two MnmE and two MnmG subunits. K(+) is required as a cofactor.

It localises to the cytoplasm. Its function is as follows. Exhibits a very high intrinsic GTPase hydrolysis rate. Involved in the addition of a carboxymethylaminomethyl (cmnm) group at the wobble position (U34) of certain tRNAs, forming tRNA-cmnm(5)s(2)U34. The chain is tRNA modification GTPase MnmE from Prochlorococcus marinus (strain NATL2A).